A 396-amino-acid chain; its full sequence is Lipid-A-disaccharide synthase (396 aa).

Belongs to the LpxB family.

The catalysed reaction is a lipid X + a UDP-2-N,3-O-bis[(3R)-3-hydroxyacyl]-alpha-D-glucosamine = a lipid A disaccharide + UDP + H(+). It functions in the pathway bacterial outer membrane biogenesis; LPS lipid A biosynthesis. In terms of biological role, condensation of UDP-2,3-diacylglucosamine and 2,3-diacylglucosamine-1-phosphate to form lipid A disaccharide, a precursor of lipid A, a phosphorylated glycolipid that anchors the lipopolysaccharide to the outer membrane of the cell. This Nitrobacter winogradskyi (strain ATCC 25391 / DSM 10237 / CIP 104748 / NCIMB 11846 / Nb-255) protein is Lipid-A-disaccharide synthase.